The primary structure comprises 150 residues: UPF0756 membrane protein HD_1071 (150 aa).

The next 4 membrane-spanning stretches (helical) occupy residues methionine 1–leucine 21, tyrosine 52–glycine 72, isoleucine 82–glycine 102, and isoleucine 114–valine 134.

It belongs to the UPF0756 family.

It localises to the cell membrane. This is UPF0756 membrane protein HD_1071 from Haemophilus ducreyi (strain 35000HP / ATCC 700724).